We begin with the raw amino-acid sequence, 167 residues long: SsrA-binding protein (167 aa).

The tract at residues 137–167 (GKQSHDKRDAAKERDWQRDKQRVMRRHNRDA) is disordered. Positions 139 to 158 (QSHDKRDAAKERDWQRDKQR) are enriched in basic and acidic residues.

This sequence belongs to the SmpB family.

Its subcellular location is the cytoplasm. Functionally, required for rescue of stalled ribosomes mediated by trans-translation. Binds to transfer-messenger RNA (tmRNA), required for stable association of tmRNA with ribosomes. tmRNA and SmpB together mimic tRNA shape, replacing the anticodon stem-loop with SmpB. tmRNA is encoded by the ssrA gene; the 2 termini fold to resemble tRNA(Ala) and it encodes a 'tag peptide', a short internal open reading frame. During trans-translation Ala-aminoacylated tmRNA acts like a tRNA, entering the A-site of stalled ribosomes, displacing the stalled mRNA. The ribosome then switches to translate the ORF on the tmRNA; the nascent peptide is terminated with the 'tag peptide' encoded by the tmRNA and targeted for degradation. The ribosome is freed to recommence translation, which seems to be the essential function of trans-translation. The protein is SsrA-binding protein of Xanthomonas campestris pv. campestris (strain 8004).